The chain runs to 529 residues: Bifunctional purine biosynthesis protein PurH (529 aa).

The MGS-like domain maps to 1–148; it reads MQQRRPIRRA…KNHKDVAIVV (148 aa).

This sequence belongs to the PurH family.

The catalysed reaction is (6R)-10-formyltetrahydrofolate + 5-amino-1-(5-phospho-beta-D-ribosyl)imidazole-4-carboxamide = 5-formamido-1-(5-phospho-D-ribosyl)imidazole-4-carboxamide + (6S)-5,6,7,8-tetrahydrofolate. It carries out the reaction IMP + H2O = 5-formamido-1-(5-phospho-D-ribosyl)imidazole-4-carboxamide. The protein operates within purine metabolism; IMP biosynthesis via de novo pathway; 5-formamido-1-(5-phospho-D-ribosyl)imidazole-4-carboxamide from 5-amino-1-(5-phospho-D-ribosyl)imidazole-4-carboxamide (10-formyl THF route): step 1/1. It participates in purine metabolism; IMP biosynthesis via de novo pathway; IMP from 5-formamido-1-(5-phospho-D-ribosyl)imidazole-4-carboxamide: step 1/1. This Pectobacterium atrosepticum (strain SCRI 1043 / ATCC BAA-672) (Erwinia carotovora subsp. atroseptica) protein is Bifunctional purine biosynthesis protein PurH.